Here is a 146-residue protein sequence, read N- to C-terminus: MSASAFNFAFRRFWNSETGPKTVHFWAPTLKWGLVFAGLNDIKRPVEKVSGAQNLSLLATALIWTRWSFVIKPKNYLLASVNFFLGCTAGYHLTRIANFRIRNGDSFKQVIHYIIKGETPAAVAAKQTASTSMNKGVIGTNPPITH.

The N-terminal 20 residues, 1 to 20 (MSASAFNFAFRRFWNSETGP), are a transit peptide targeting the mitochondrion. Transmembrane regions (helical) follow at residues 23 to 39 (VHFW…FAGL), 55 to 71 (LSLL…SFVI), and 78 to 94 (LASV…YHLT).

Belongs to the mitochondrial pyruvate carrier (MPC) (TC 2.A.105) family. As to quaternary structure, the functional 150 kDa pyruvate import complex is a heteromer of MPC1 and either MPC2 or MPC3.

The protein resides in the mitochondrion. The protein localises to the mitochondrion inner membrane. Its function is as follows. Mediates the uptake of pyruvate into mitochondria. The protein is Mitochondrial pyruvate carrier 3 of Saccharomyces cerevisiae (strain ATCC 204508 / S288c) (Baker's yeast).